A 365-amino-acid polypeptide reads, in one-letter code: 3-dehydroquinate synthase (365 aa).

NAD(+)-binding positions include 106-110 (GVIGD), 130-131 (TT), lysine 142, lysine 151, and 169-172 (FFAT). Residues glutamate 184, histidine 247, and histidine 264 each coordinate Zn(2+).

This sequence belongs to the sugar phosphate cyclases superfamily. Dehydroquinate synthase family. Co(2+) is required as a cofactor. The cofactor is Zn(2+). NAD(+) serves as cofactor.

The protein localises to the cytoplasm. It carries out the reaction 7-phospho-2-dehydro-3-deoxy-D-arabino-heptonate = 3-dehydroquinate + phosphate. Its pathway is metabolic intermediate biosynthesis; chorismate biosynthesis; chorismate from D-erythrose 4-phosphate and phosphoenolpyruvate: step 2/7. Catalyzes the conversion of 3-deoxy-D-arabino-heptulosonate 7-phosphate (DAHP) to dehydroquinate (DHQ). The chain is 3-dehydroquinate synthase from Listeria monocytogenes serotype 4a (strain HCC23).